The sequence spans 472 residues: Methanethiol oxidase (472 aa).

Ala2 bears the N-acetylalanine mark. Residues Ser111 and Ser467 each carry the phosphoserine modification.

Belongs to the selenium-binding protein family. Interacts with USP33. In terms of processing, the N-terminus is blocked. In terms of tissue distribution, highly expressed in liver, kidney and, to a lesser extent, lung.

Its subcellular location is the nucleus. It is found in the cytoplasm. It localises to the cytosol. The protein localises to the membrane. It catalyses the reaction methanethiol + O2 + H2O = hydrogen sulfide + formaldehyde + H2O2 + H(+). It participates in organosulfur degradation. Its function is as follows. Catalyzes the oxidation of methanethiol, an organosulfur compound known to be produced in substantial amounts by gut bacteria. Selenium-binding protein which may be involved in the sensing of reactive xenobiotics in the cytoplasm. May be involved in intra-Golgi protein transport. The polypeptide is Methanethiol oxidase (Selenbp1) (Mus musculus (Mouse)).